Consider the following 336-residue polypeptide: Immune-associated nucleotide-binding protein 13 (336 aa).

The region spanning 15–221 is the AIG1-type G domain; that stretch reads KPERTLVLLG…YMADLSHELR (207 aa). Positions 24 to 31 are G1; sequence GRTGNGKS. GTP contacts are provided by residues 24–32 and S45; that span reads GRTGNGKSA. The segment at 51 to 55 is G2; that stretch reads FITKE. Residues 73–76 are G3; the sequence is DTPG. The G4 stretch occupies residues 143–146; that stretch reads TNED. A G5 region spans residues 179 to 181; that stretch reads DNS. N180 is a binding site for GTP. The stretch at 265 to 328 forms a coiled coil; that stretch reads KEKISNQLKE…EKETASLRTE (64 aa).

It belongs to the TRAFAC class TrmE-Era-EngA-EngB-Septin-like GTPase superfamily. AIG1/Toc34/Toc159-like paraseptin GTPase family. IAN subfamily. As to expression, expressed in pollen grains.

In Arabidopsis thaliana (Mouse-ear cress), this protein is Immune-associated nucleotide-binding protein 13.